The sequence spans 568 residues: Protein adenylyltransferase SelO, mitochondrial (568 aa).

ATP is bound by residues Gly120, Gly122, Arg123, Lys144, Asp156, Gly157, Arg208, and Arg215. The active-site Proton acceptor is Asp287. Mg(2+) contacts are provided by Asn288 and Asp297. Residue Asp297 coordinates ATP.

This sequence belongs to the SELO family. The cofactor is Mg(2+). Post-translationally, forms probably one or more intrachain disulfide bridges.

Its subcellular location is the mitochondrion. The enzyme catalyses L-tyrosyl-[protein] + ATP = O-(5'-adenylyl)-L-tyrosyl-[protein] + diphosphate. In terms of biological role, catalyzes the transfer of adenosine 5'-monophosphate (AMP) to Tyr residues of target mitochondrial proteins (AMPylation). Involved in redox homeostasis by regulating the cellular response to oxidative stress. Regulates protein S-glutathionylation levels possibly by AMPylation of deglutathionylation enzymes such as glutaredoxins. The protein is Protein adenylyltransferase SelO, mitochondrial of Schizosaccharomyces pombe (strain 972 / ATCC 24843) (Fission yeast).